The primary structure comprises 334 residues: Ornithine carbamoyltransferase (334 aa).

Residues 56 to 59 (STRT), glutamine 83, arginine 107, and 134 to 137 (HPTQ) each bind carbamoyl phosphate. L-ornithine contacts are provided by residues asparagine 168, aspartate 232, and 236–237 (SM). Carbamoyl phosphate contacts are provided by residues 274–275 (CL) and arginine 320.

The protein belongs to the aspartate/ornithine carbamoyltransferase superfamily. OTCase family.

It localises to the cytoplasm. The enzyme catalyses carbamoyl phosphate + L-ornithine = L-citrulline + phosphate + H(+). It functions in the pathway amino-acid biosynthesis; L-arginine biosynthesis; L-arginine from L-ornithine and carbamoyl phosphate: step 1/3. Functionally, reversibly catalyzes the transfer of the carbamoyl group from carbamoyl phosphate (CP) to the N(epsilon) atom of ornithine (ORN) to produce L-citrulline. This Escherichia coli (strain 55989 / EAEC) protein is Ornithine carbamoyltransferase.